The following is a 234-amino-acid chain: MNNMFEPPKNYNEMLPKLHKATFLNTLIYCILLVIYEYIPLITLPTKYVPPIKDHESFINWALSFGILPCAFAIFAYLISGALDLHNNAAKLLRVRYLWDKHLIIKPLSRRAGVNRKLNKDEAHNVMSNLYYPEVRKIEDKHYIELFWNKVYYFWIFFEFSIIALISFLIIFFCKQMDIFHVEGSLLSLFFFVILSFSVSGIIFALTVKPRTESQVGKIPDDKIKEFFTKNNIN.

4 consecutive transmembrane segments (helical) span residues 22-42 (TFLNTLIYCILLVIYEYIPLI), 59-79 (INWALSFGILPCAFAIFAYLI), 154-174 (FWIFFEFSIIALISFLIIFFC), and 186-206 (LLSLFFFVILSFSVSGIIFAL).

It is found in the cell membrane. This is an uncharacterized protein from Escherichia coli (strain K12).